A 1776-amino-acid polypeptide reads, in one-letter code: 6-methylsalicylic acid synthase (1776 aa).

The segment covering Met1–Pro18 has biased composition (low complexity). Positions Met1–Tyr26 are disordered. The 426-residue stretch at Ser32–Glu457 folds into the Ketosynthase family 3 (KS3) domain. Active-site for beta-ketoacyl synthase activity residues include Cys204, His339, and His379. The interval Val567–Glu880 is malonyl-CoA:ACP transacylase (MAT) domain. An N-terminal hotdog fold region spans residues His925–Ser1044. The dehydratase (DH) domain stretch occupies residues His925 to Glu1196. The region spanning His925–Val1201 is the PKS/mFAS DH domain. Catalysis depends on His957, which acts as the Proton acceptor; for dehydratase activity. The C-terminal hotdog fold stretch occupies residues Thr1058–Val1201. Asp1113 (proton donor; for dehydratase activity) is an active-site residue. The segment at Met1205–Glu1657 is product template (PT) domain. A Carrier domain is found at Ala1700–Ile1774. Ser1734 carries the O-(pantetheine 4'-phosphoryl)serine modification.

It localises to the cytoplasm. It is found in the cytosol. The enzyme catalyses 3 malonyl-CoA + acetyl-CoA + NADPH + 3 H(+) = 6-methylsalicylate + 3 CO2 + NADP(+) + 4 CoA + H2O. Its pathway is mycotoxin biosynthesis; patulin biosynthesis. 6-methylsalicylic acid synthase; part of the gene cluster that mediates the biosynthesis of patulin, an acetate-derived tetraketide mycotoxin produced by several fungal species that shows antimicrobial properties against several bacteria. PatK catalyzes the first step of the pathway which is the synthesis of 6-methylsalicylic acid via condensation of 1 acetate and 3 malonate units. The pathway begins with the synthesis of 6-methylsalicylic acid by the polyketide synthase (PKS) patK via condensation of acetate and malonate units. The 6-methylsalicylic acid decarboxylase patG then catalyzes the decarboxylation of 6-methylsalicylic acid to yield m-cresol (also known as 3-methylphenol). These first reactions occur in the cytosol. The intermediate m-cresol is then transported into the endoplasmic reticulum where the cytochrome P450 monooxygenase patH converts it to m-hydroxybenzyl alcohol, which is further converted to gentisyl alcohol by the cytochrome P450 monooxygenase patI. The oxidoreductases patJ and patO further convert gentisyl alcohol to isoepoxydon in the vacuole. PatN catalyzes then the transformation of isoepoxydon into phyllostine. The cluster protein patF is responsible for the conversion from phyllostine to neopatulin whereas the alcohol dehydrogenase patD converts neopatulin to E-ascladiol. The steps between isoepoxydon and E-ascladiol occur in the cytosol, and E-ascladiol is probably secreted to the extracellular space by one of the cluster-specific transporters patC or patM. Finally, the secreted patulin synthase patE catalyzes the conversion of E-ascladiol to patulin. In Penicillium expansum (Blue mold rot fungus), this protein is 6-methylsalicylic acid synthase.